The sequence spans 217 residues: Large ribosomal subunit protein uL3 (217 aa).

The protein belongs to the universal ribosomal protein uL3 family. In terms of assembly, part of the 50S ribosomal subunit. Forms a cluster with proteins L14 and L19.

In terms of biological role, one of the primary rRNA binding proteins, it binds directly near the 3'-end of the 23S rRNA, where it nucleates assembly of the 50S subunit. This Mycobacterium bovis (strain ATCC BAA-935 / AF2122/97) protein is Large ribosomal subunit protein uL3.